The following is a 456-amino-acid chain: Kynurenine 3-monooxygenase (456 aa).

It belongs to the aromatic-ring hydroxylase family. KMO subfamily. It depends on FAD as a cofactor.

It catalyses the reaction L-kynurenine + NADPH + O2 + H(+) = 3-hydroxy-L-kynurenine + NADP(+) + H2O. The protein operates within cofactor biosynthesis; NAD(+) biosynthesis; quinolinate from L-kynurenine: step 1/3. Its function is as follows. Catalyzes the hydroxylation of L-kynurenine (L-Kyn) to form 3-hydroxy-L-kynurenine (L-3OHKyn). Required for synthesis of quinolinic acid. This Xanthomonas campestris pv. campestris (strain 8004) protein is Kynurenine 3-monooxygenase.